Reading from the N-terminus, the 325-residue chain is Cyclic AMP-responsive element-binding protein 1 (325 aa).

Composition is skewed to polar residues over residues 1–11 (MESGAENQQSG) and 18–27 (AESQQMTVQA). Disordered regions lie at residues 1–27 (MESG…TVQA) and 92–111 (SEDS…RREI). The region spanning 85 to 144 (QISTIAESEDSQESVDSVTDSQKRREILSRRPSYRKILNDLSSDAPGVPRIEEEKSEEET) is the KID domain. Position 117 is a phosphoserine; by CaMK1, CaMK2, CaMK4, PKB/AKT1 or PKB/AKT2, RPS6KA3, RPS6KA4, RPS6KA5 and SGK1 (S117). K120 participates in a covalent cross-link: Glycyl lysine isopeptide (Lys-Gly) (interchain with G-Cter in SUMO2). The segment at 124–146 (DLSSDAPGVPRIEEEKSEEETSA) is disordered. S126 carries the phosphoserine; by CaMK2 modification. Residue S255 is modified to Phosphoserine; by HIPK2. One can recognise a bZIP domain in the interval 267 to 325 (ARKREVRLMKNREAARECRRKKKEYVKCLENRVAVLENQNKTLIEELKALKDLYCHKSD). Residues 268 to 293 (RKREVRLMKNREAARECRRKKKEYVK) form a basic motif region. Residues K269 and K288 each participate in a glycyl lysine isopeptide (Lys-Gly) (interchain with G-Cter in SUMO1) cross-link. The tract at residues 295-316 (LENRVAVLENQNKTLIEELKAL) is leucine-zipper.

Belongs to the bZIP family. Interacts with PPRC1. Binds DNA as a dimer. This dimer is stabilized by magnesium ions. Interacts, through the bZIP domain, with the coactivators CRTC1/TORC1, CRTC2/TORC2 and CRTC3/TORC3. When phosphorylated on Ser-117, binds CREBBP. Interacts with CREBL2; regulates CREB1 phosphorylation, stability and transcriptional activity. Interacts (phosphorylated form) with TOX3. Interacts with ARRB1. Binds to HIPK2. Interacts with SGK1. Interacts with TSSK4; this interaction facilitates phosphorylation on Ser-117. Forms a complex with KMT2A and CREBBP. Interacts with TOX4; CREB1 is required for full induction of TOX4-dependent activity and the interaction is increased by cAMP and inhibited by insulin. Sumoylated with SUMO1. Sumoylation on Lys-288, but not on Lys-269, is required for nuclear localization of this protein. Sumoylation is enhanced under hypoxia, promoting nuclear localization and stabilization. In terms of processing, stimulated by phosphorylation. Phosphorylation of both Ser-117 and Ser-126 in the SCN regulates the activity of CREB and participates in circadian rhythm generation. Phosphorylation of Ser-117 allows CREBBP binding. Phosphorylated upon calcium influx by CaMK4 and CaMK2 on Ser-117. CaMK4 is much more potent than CaMK2 in activating CREB. Phosphorylated by CaMK2 on Ser-126. Phosphorylation of Ser-126 blocks CREB-mediated transcription even when Ser-117 is phosphorylated. Phosphorylated by CaMK1. Phosphorylation of Ser-255 by HIPK2 in response to genotoxic stress promotes CREB1 activity, facilitating the recruitment of the coactivator CBP. Phosphorylated at Ser-117 by RPS6KA3, RPS6KA4 and RPS6KA5 in response to mitogenic or stress stimuli. CREBL2 positively regulates phosphorylation at Ser-117 thereby stimulating CREB1 transcriptional activity. In liver, phosphorylation is induced by fasting or glucagon in a circadian fashion. Phosphorylated by TSSK4 on Ser-117.

Its subcellular location is the nucleus. In terms of biological role, phosphorylation-dependent transcription factor that stimulates transcription upon binding to the DNA cAMP response element (CRE), a sequence present in many viral and cellular promoters. Transcription activation is enhanced by the TORC coactivators which act independently of Ser-117 phosphorylation. Involved in different cellular processes including the synchronization of circadian rhythmicity and the differentiation of adipose cells. Regulates the expression of apoptotic and inflammatory response factors in cardiomyocytes in response to ERFE-mediated activation of AKT signaling. The protein is Cyclic AMP-responsive element-binding protein 1 (CREB1) of Bos taurus (Bovine).